We begin with the raw amino-acid sequence, 245 residues long: Uridylate kinase (245 aa).

12–15 (KLSG) contributes to the ATP binding site. Residues 20-25 (GERGVG) are involved in allosteric activation by GTP. Gly54 is a binding site for UMP. Residues Gly55 and Arg59 each coordinate ATP. Residues Asp74 and 135 to 142 (IGSPYFST) contribute to the UMP site. Asn163, Tyr169, and Asp172 together coordinate ATP.

The protein belongs to the UMP kinase family. As to quaternary structure, homohexamer.

It is found in the cytoplasm. The enzyme catalyses UMP + ATP = UDP + ADP. Its pathway is pyrimidine metabolism; CTP biosynthesis via de novo pathway; UDP from UMP (UMPK route): step 1/1. With respect to regulation, allosterically activated by GTP. Inhibited by UTP. Catalyzes the reversible phosphorylation of UMP to UDP. The polypeptide is Uridylate kinase (Streptococcus pneumoniae serotype 2 (strain D39 / NCTC 7466)).